The chain runs to 115 residues: U3-lycotoxin-Ls1n (115 aa).

Residues 1–20 (MKFVLLFGVLLVTLFSYSSA) form the signal peptide. Residues 21 to 44 (EMLDDFDQADEDELLSLIEKEEAR) constitute a propeptide that is removed on maturation. Cystine bridges form between Cys48–Cys63, Cys55–Cys72, Cys62–Cys87, and Cys74–Cys85.

Belongs to the neurotoxin 19 (CSTX) family. 01 subfamily. Expressed by the venom gland.

It localises to the secreted. The protein is U3-lycotoxin-Ls1n of Lycosa singoriensis (Wolf spider).